Here is a 425-residue protein sequence, read N- to C-terminus: E3 ubiquitin-protein ligase TRIM31 (425 aa).

The segment at 16 to 57 (CPICLDILQKPVTIDCGHNFCLKCITQIGETSCGFFKCPLCK) adopts an RING-type zinc-finger fold. The B box-type zinc-finger motif lies at 90–131 (RKEATCPRHQEMFHYFCEDDGKFLCFVCRESKDHKSHNVSLI). Zn(2+) is bound by residues Cys-95, His-98, Cys-117, and His-123. Coiled-coil stretches lie at residues 126–162 (HNVSLIEEAAQNYQGQIQEQIQVLQQKEKETVQVKAQ) and 270–307 (LELEKKLSEAKSRHDSITGSLKKFKDQLQADRKKDENR). A disordered region spans residues 328-360 (HKMNKTSEPGSSSAGGRTTSGPPNHHSSAPSHS). Over residues 336–360 (PGSSSAGGRTTSGPPNHHSSAPSHS) the composition is skewed to low complexity.

This sequence belongs to the TRIM/RBCC family. May form oligomers. Interacts with isoform p52shc of SHC1. In terms of processing, auto-ubiquitinated (in vitro). As to expression, up-regulated in gastric adenocarcinomas.

The protein localises to the cytoplasm. It is found in the mitochondrion. The enzyme catalyses S-ubiquitinyl-[E2 ubiquitin-conjugating enzyme]-L-cysteine + [acceptor protein]-L-lysine = [E2 ubiquitin-conjugating enzyme]-L-cysteine + N(6)-ubiquitinyl-[acceptor protein]-L-lysine.. It functions in the pathway protein modification; protein ubiquitination. E3 ubiquitin-protein ligase that acts as a regulator of antiviral immune response and inflammation by mediating ubiquitination of substrates. Acts as a regulator of innate immune defense against viruses by mediating 'Lys-63'-linked ubiquitination of MAVS, promoting MAVS polymerization and formation of three-stranded helical filaments on mitochondria. Acts as a negative regulator of the NLRP3 inflammasome by catalyzing 'Lys-48'-linked ubiquitination of NLRP3, leading to its degradation. Regulator of Src-induced anchorage independent cell growth. This chain is E3 ubiquitin-protein ligase TRIM31, found in Homo sapiens (Human).